A 385-amino-acid chain; its full sequence is Alkanesulfonate monooxygenase (385 aa).

It belongs to the SsuD family.

The enzyme catalyses an alkanesulfonate + FMNH2 + O2 = an aldehyde + FMN + sulfite + H2O + 2 H(+). Catalyzes the desulfonation of aliphatic sulfonates. This Paraburkholderia phymatum (strain DSM 17167 / CIP 108236 / LMG 21445 / STM815) (Burkholderia phymatum) protein is Alkanesulfonate monooxygenase.